We begin with the raw amino-acid sequence, 457 residues long: Ribosomal protein uS12 methylthiotransferase RimO (457 aa).

Positions 6–116 (PKVGFVSLGC…VMEAVHAALP (111 aa)) constitute an MTTase N-terminal domain. Residues C15, C51, C80, C147, C151, and C154 each contribute to the [4Fe-4S] cluster site. The Radical SAM core domain maps to 133–370 (LTPRHYAYLK…MARQAEISAA (238 aa)). Residues 373–441 (EAKIGSVQQC…EHDLFGDALP (69 aa)) form the TRAM domain.

It belongs to the methylthiotransferase family. RimO subfamily. [4Fe-4S] cluster is required as a cofactor.

It localises to the cytoplasm. It catalyses the reaction L-aspartate(89)-[ribosomal protein uS12]-hydrogen + (sulfur carrier)-SH + AH2 + 2 S-adenosyl-L-methionine = 3-methylsulfanyl-L-aspartate(89)-[ribosomal protein uS12]-hydrogen + (sulfur carrier)-H + 5'-deoxyadenosine + L-methionine + A + S-adenosyl-L-homocysteine + 2 H(+). Its function is as follows. Catalyzes the methylthiolation of an aspartic acid residue of ribosomal protein uS12. In Xanthomonas campestris pv. campestris (strain 8004), this protein is Ribosomal protein uS12 methylthiotransferase RimO.